A 308-amino-acid chain; its full sequence is uncharacterized protein (308 aa).

This is an uncharacterized protein from Acanthamoeba polyphaga (Amoeba).